The following is a 209-amino-acid chain: Uracil phosphoribosyltransferase (209 aa).

5-phospho-alpha-D-ribose 1-diphosphate contacts are provided by residues arginine 79, arginine 104, and 131–139 (DPMLATGNS). Residues isoleucine 194 and 199–201 (GDA) each bind uracil. A 5-phospho-alpha-D-ribose 1-diphosphate-binding site is contributed by aspartate 200.

It belongs to the UPRTase family. Requires Mg(2+) as cofactor.

It catalyses the reaction UMP + diphosphate = 5-phospho-alpha-D-ribose 1-diphosphate + uracil. It participates in pyrimidine metabolism; UMP biosynthesis via salvage pathway; UMP from uracil: step 1/1. Its activity is regulated as follows. Allosterically activated by GTP. Catalyzes the conversion of uracil and 5-phospho-alpha-D-ribose 1-diphosphate (PRPP) to UMP and diphosphate. This chain is Uracil phosphoribosyltransferase, found in Rhodococcus jostii (strain RHA1).